The following is a 92-amino-acid chain: Small ribosomal subunit protein uS19 (92 aa).

Belongs to the universal ribosomal protein uS19 family.

Its function is as follows. Protein S19 forms a complex with S13 that binds strongly to the 16S ribosomal RNA. The polypeptide is Small ribosomal subunit protein uS19 (Mycoplasmopsis synoviae (strain 53) (Mycoplasma synoviae)).